Reading from the N-terminus, the 601-residue chain is MEFKVIAEYFDKLEKISSRLQLTALLADLLSKSDKAIIDKVVYIIQGKLWPDFLGYPELGIGEKFLIKAISIATNTDENSVENLYKSIGDLGEVARRLKSKQQSTGILGFLGTSSKESLKVDEVYSTLSKVALTTGEGSRDLKIRLLAGLLKKADPLEAKFLVRFVEGRLRVGIGDATVLDAMAIAFGGGQSASEIVERAYNLRADLGNIAKIIVEKGIEALKTLKPEVGIPIRPMLAERLSNPEEILKKVGGSALVDYKYDGERAQIHKKDDKIFIFSRRLENITSQYPDVVEYISKYTEGKEFIIEGEIVAVDPESGEMRSFQELMHRKRKSDIYEAIKEYPVNVFLFDLMYYEDVDYTTKPLEVRRKLLESIVKPNDYVKIAHHIQVNNVEDLKSFFYRAISEGGEGVMVKAIGKDAIYQAGARGWLWIKLKRDYQSEMADTVDLVVVGGFYGKGKRGGKISSLLMAAYNPKTDTFESVCKVASGFSDEQLDELQKKLMEIKRDIKHPRVNSKMEPDIWVEPVYVAEIIGAEITISPLHTCCQDVVEKDAGLSIRFPRFIRWRDDKSPEDATTTDEILEMYNKQPKKKIESPPIDESV.

D258 provides a ligand contact to ATP. The active-site N6-AMP-lysine intermediate is the K260. The ATP site is built by R265, R280, E310, F350, R427, and K433. Residues 568-601 (DKSPEDATTTDEILEMYNKQPKKKIESPPIDESV) form a disordered region.

This sequence belongs to the ATP-dependent DNA ligase family. Mg(2+) is required as a cofactor.

The catalysed reaction is ATP + (deoxyribonucleotide)n-3'-hydroxyl + 5'-phospho-(deoxyribonucleotide)m = (deoxyribonucleotide)n+m + AMP + diphosphate.. In terms of biological role, DNA ligase that seals nicks in double-stranded DNA during DNA replication, DNA recombination and DNA repair. In Saccharolobus islandicus (strain L.S.2.15 / Lassen #1) (Sulfolobus islandicus), this protein is DNA ligase.